The chain runs to 516 residues: Bifunctional purine biosynthesis protein PurH (516 aa).

An MGS-like domain is found at 1 to 146; sequence MTRLALLSVS…KNYAHVTVLS (146 aa).

This sequence belongs to the PurH family.

The enzyme catalyses (6R)-10-formyltetrahydrofolate + 5-amino-1-(5-phospho-beta-D-ribosyl)imidazole-4-carboxamide = 5-formamido-1-(5-phospho-D-ribosyl)imidazole-4-carboxamide + (6S)-5,6,7,8-tetrahydrofolate. It carries out the reaction IMP + H2O = 5-formamido-1-(5-phospho-D-ribosyl)imidazole-4-carboxamide. Its pathway is purine metabolism; IMP biosynthesis via de novo pathway; 5-formamido-1-(5-phospho-D-ribosyl)imidazole-4-carboxamide from 5-amino-1-(5-phospho-D-ribosyl)imidazole-4-carboxamide (10-formyl THF route): step 1/1. It participates in purine metabolism; IMP biosynthesis via de novo pathway; IMP from 5-formamido-1-(5-phospho-D-ribosyl)imidazole-4-carboxamide: step 1/1. This Rippkaea orientalis (strain PCC 8801 / RF-1) (Cyanothece sp. (strain PCC 8801)) protein is Bifunctional purine biosynthesis protein PurH.